The chain runs to 962 residues: Phagocyte signaling-impaired protein (962 aa).

TPR repeat units follow at residues 45–78, 79–112, and 523–560; these read LCARALKGLALLRLGRYEESHGCLQAVAEDKPTD, DSTLQVLSFCYREMEQLNKIVELYQHAVKKNPGN, and QIQLDSMGYVHCQLLPLCGRFSGARNSYDTTMKFFTNS. Residues 856-880 are disordered; it reads TKVKKKQGDNKTQDTPQPVSEKERS.

It belongs to the MDM20/NAA25 family. In terms of assembly, component of the N-terminal acetyltransferase B (NatB) complex.

Its subcellular location is the lysosome. Non-catalytic subunit of the NatB complex which catalyzes acetylation of the N-terminal methionine residues of proteins beginning with Met-Asp or Met-Glu. Has 2 roles in the larval immune response: required both for the phagocytic degradation of internalized bacteria and for the induction of Defensin in the fat body. Within the phagocytic blood cells, has a role in detection of infection and activation of the humoral immune response. The protein is Phagocyte signaling-impaired protein of Drosophila pseudoobscura pseudoobscura (Fruit fly).